A 255-amino-acid chain; its full sequence is 5-oxoprolinase subunit A (255 aa).

The protein belongs to the LamB/PxpA family. In terms of assembly, forms a complex composed of PxpA, PxpB and PxpC.

It carries out the reaction 5-oxo-L-proline + ATP + 2 H2O = L-glutamate + ADP + phosphate + H(+). Catalyzes the cleavage of 5-oxoproline to form L-glutamate coupled to the hydrolysis of ATP to ADP and inorganic phosphate. This Campylobacter jejuni subsp. doylei (strain ATCC BAA-1458 / RM4099 / 269.97) protein is 5-oxoprolinase subunit A.